We begin with the raw amino-acid sequence, 195 residues long: Interferon tau-2 (195 aa).

An N-terminal signal peptide occupies residues 1-23; it reads MAFVLSLLMALVLVSYGPGGSLG. 2 disulfide bridges follow: cysteine 24/cysteine 122 and cysteine 52/cysteine 162.

This sequence belongs to the alpha/beta interferon family. IFN-alphaII subfamily. Constitutively and exclusively expressed in the mononuclear cells of the extraembryonic trophectoderm.

The protein resides in the secreted. In terms of biological role, paracrine hormone primarily responsible for maternal recognition of pregnancy. Interacts with endometrial receptors, probably type I interferon receptors, and blocks estrogen receptor expression, preventing the estrogen-induced increase in oxytocin receptor expression in the endometrium. This results in the suppression of the pulsatile endometrial release of the luteolytic hormone prostaglandin F2-alpha, hindering the regression of the corpus luteum (luteolysis) and therefore a return to ovarian cyclicity. This, and a possible direct effect of IFN-tau on prostaglandin synthesis, leads in turn to continued ovarian progesterone secretion, which stimulates the secretion by the endometrium of the nutrients required for the growth of the conceptus. In summary, displays particularly high antiviral and antiproliferative potency concurrently with particular weak cytotoxicity, high antiluteolytic activity and immunomodulatory properties. In contrast with other IFNs, IFN-tau is not virally inducible. This chain is Interferon tau-2 (IFNT2), found in Ovis aries (Sheep).